The following is a 295-amino-acid chain: Phosphatidylserine decarboxylase proenzyme (295 aa).

Active-site charge relay system; for autoendoproteolytic cleavage activity residues include D101, H158, and S262. The Schiff-base intermediate with substrate; via pyruvic acid; for decarboxylase activity role is filled by S262. At S262 the chain carries Pyruvic acid (Ser); by autocatalysis.

It belongs to the phosphatidylserine decarboxylase family. PSD-B subfamily. Prokaryotic type I sub-subfamily. As to quaternary structure, heterodimer of a large membrane-associated beta subunit and a small pyruvoyl-containing alpha subunit. Pyruvate is required as a cofactor. In terms of processing, is synthesized initially as an inactive proenzyme. Formation of the active enzyme involves a self-maturation process in which the active site pyruvoyl group is generated from an internal serine residue via an autocatalytic post-translational modification. Two non-identical subunits are generated from the proenzyme in this reaction, and the pyruvate is formed at the N-terminus of the alpha chain, which is derived from the carboxyl end of the proenzyme. The autoendoproteolytic cleavage occurs by a canonical serine protease mechanism, in which the side chain hydroxyl group of the serine supplies its oxygen atom to form the C-terminus of the beta chain, while the remainder of the serine residue undergoes an oxidative deamination to produce ammonia and the pyruvoyl prosthetic group on the alpha chain. During this reaction, the Ser that is part of the protease active site of the proenzyme becomes the pyruvoyl prosthetic group, which constitutes an essential element of the active site of the mature decarboxylase.

The protein localises to the cell membrane. It carries out the reaction a 1,2-diacyl-sn-glycero-3-phospho-L-serine + H(+) = a 1,2-diacyl-sn-glycero-3-phosphoethanolamine + CO2. It functions in the pathway phospholipid metabolism; phosphatidylethanolamine biosynthesis; phosphatidylethanolamine from CDP-diacylglycerol: step 2/2. Its function is as follows. Catalyzes the formation of phosphatidylethanolamine (PtdEtn) from phosphatidylserine (PtdSer). The chain is Phosphatidylserine decarboxylase proenzyme from Pasteurella multocida (strain Pm70).